Consider the following 365-residue polypeptide: Peptide chain release factor 2 (365 aa).

Gln-251 is subject to N5-methylglutamine.

It belongs to the prokaryotic/mitochondrial release factor family. Post-translationally, methylated by PrmC. Methylation increases the termination efficiency of RF2.

It is found in the cytoplasm. Its function is as follows. Peptide chain release factor 2 directs the termination of translation in response to the peptide chain termination codons UGA and UAA. This chain is Peptide chain release factor 2, found in Neorickettsia sennetsu (strain ATCC VR-367 / Miyayama) (Ehrlichia sennetsu).